The sequence spans 317 residues: 4-diphosphocytidyl-2-C-methyl-D-erythritol kinase (317 aa).

K17 is a catalytic residue. An ATP-binding site is contributed by 109 to 119 (PVAGGMGGGSA). D151 is an active-site residue.

Belongs to the GHMP kinase family. IspE subfamily.

It catalyses the reaction 4-CDP-2-C-methyl-D-erythritol + ATP = 4-CDP-2-C-methyl-D-erythritol 2-phosphate + ADP + H(+). It participates in isoprenoid biosynthesis; isopentenyl diphosphate biosynthesis via DXP pathway; isopentenyl diphosphate from 1-deoxy-D-xylulose 5-phosphate: step 3/6. In terms of biological role, catalyzes the phosphorylation of the position 2 hydroxy group of 4-diphosphocytidyl-2C-methyl-D-erythritol. The sequence is that of 4-diphosphocytidyl-2-C-methyl-D-erythritol kinase from Paenarthrobacter aurescens (strain TC1).